A 641-amino-acid polypeptide reads, in one-letter code: Epsin-2 (641 aa).

A 1,2-diacyl-sn-glycero-3-phospho-(1D-myo-inositol-4,5-bisphosphate) contacts are provided by Arg-8, Lys-11, Arg-25, Asn-30, Arg-63, and His-73. An ENTH domain is found at 12 to 144; that stretch reads NIVNNYSEAE…KDEERLKAER (133 aa). A phosphoserine mark is found at Arg-153 and Gln-156. Over residues 163–181 the composition is skewed to polar residues; sequence SNQITFGRGSSQPNLSTSH. 2 disordered regions span residues 163-214 and 255-275; these read SNQI…GAPL and RATSPRVSSELEQARPQTSGE. An Omega-N-methylarginine modification is found at Arg-170. Ser-173, Ser-192, and Ser-195 each carry phosphoserine. The span at 259 to 273 shows a compositional bias: polar residues; sequence PRVSSELEQARPQTS. UIM domains are found at residues 275-294 and 300-319; these read EEELQLQLALAMSREVAEQE and GDDLRLQMALEESRRDTVKI. A disordered region spans residues 340–425; sequence ALPSSGPAAQ…QPASSAGKRA (86 aa). A run of 6 repeats spans residues 352–354, 364–366, 377–379, 391–393, 409–411, and 427–429. Residues 352–639 are 6 X 3 AA repeats of [DE]-P-W; the sequence is EPWGPSASTN…AQATGTTNPF (288 aa). Residues 408-421 show a composition bias toward low complexity; that stretch reads SDPWAASQQPASSA. Positions 470–512 are disordered; it reads TAESVTSLPSQNNGTTSPDPFESQPLTVASSKPSSARKTPESF. The segment covering 472 to 506 has biased composition (polar residues); it reads ESVTSLPSQNNGTTSPDPFESQPLTVASSKPSSAR. At Ser-486 the chain carries Phosphoserine. Position 508 is a phosphothreonine (Thr-508). A run of 2 repeats spans residues 537–539 and 552–554. The interval 537–639 is 3 X 3 AA repeats of N-P-F; sequence NPFLAPGAPA…AQATGTTNPF (103 aa). Ser-570 carries the phosphoserine modification. Repeat 3 spans residues 637-639; that stretch reads NPF.

It belongs to the epsin family. Binds EPS15. Interacts with ITSN1. Binds AP-2 and clathrin. Interacts with UBQLN2. In terms of processing, ubiquitinated. In terms of tissue distribution, highest expression is found in brain. Detected at lower levels in lung and liver.

It is found in the cytoplasm. It localises to the cytoplasmic vesicle. The protein resides in the clathrin-coated vesicle. Its function is as follows. Plays a role in the formation of clathrin-coated invaginations and endocytosis. The chain is Epsin-2 (EPN2) from Homo sapiens (Human).